The chain runs to 224 residues: Ribosomal RNA large subunit methyltransferase E (224 aa).

S-adenosyl-L-methionine is bound by residues Gly64, Trp66, Asp97, Asp113, and Asp138. Lys178 serves as the catalytic Proton acceptor.

The protein belongs to the class I-like SAM-binding methyltransferase superfamily. RNA methyltransferase RlmE family.

The protein resides in the cytoplasm. The catalysed reaction is uridine(2552) in 23S rRNA + S-adenosyl-L-methionine = 2'-O-methyluridine(2552) in 23S rRNA + S-adenosyl-L-homocysteine + H(+). Its function is as follows. Specifically methylates the uridine in position 2552 of 23S rRNA at the 2'-O position of the ribose in the fully assembled 50S ribosomal subunit. The chain is Ribosomal RNA large subunit methyltransferase E from Albidiferax ferrireducens (strain ATCC BAA-621 / DSM 15236 / T118) (Rhodoferax ferrireducens).